The following is a 75-amino-acid chain: Conotoxin VnMSGL-0111 (75 aa).

Positions 1–20 are cleaved as a signal peptide; that stretch reads MSGLEIMVLTLLLLVSMATS. Positions 21 to 44 are excised as a propeptide; it reads HQDGGEKQATQRDAINVRRRSITR. Disulfide bonds link Cys-48–Cys-60, Cys-52–Cys-69, and Cys-59–Cys-73.

Belongs to the conotoxin O3 superfamily. As to expression, expressed by the venom duct.

It is found in the secreted. This chain is Conotoxin VnMSGL-0111, found in Conus ventricosus (Mediterranean cone).